Reading from the N-terminus, the 239-residue chain is Lysophospholipase-like protein 1 (239 aa).

Ala-2 is modified (N-acetylalanine). Active-site charge relay system residues include Ser-125, Asp-180, and His-212.

Belongs to the AB hydrolase superfamily. AB hydrolase 2 family.

It is found in the cytoplasm. Its subcellular location is the cytosol. The enzyme catalyses S-hexadecanoyl-L-cysteinyl-[protein] + H2O = L-cysteinyl-[protein] + hexadecanoate + H(+). Its function is as follows. Palmitoyl thioesterase that catalyzes depalmitoylation of CGAS and KCNMA1. Acts as a regulator of innate immunity by mediating depalmitoylation of CGAS, thereby preventing CGAS homodimerization and cyclic GMP-AMP synthase activity. Does not exhibit phospholipase nor triacylglycerol lipase activity, able to hydrolyze only short chain substrates due to its shallow active site. This chain is Lysophospholipase-like protein 1, found in Mus musculus (Mouse).